Consider the following 732-residue polypeptide: 1,4-alpha-glucan branching enzyme GlgB 1 (732 aa).

Residue Asp411 is the Nucleophile of the active site. Catalysis depends on Glu464, which acts as the Proton donor.

The protein belongs to the glycosyl hydrolase 13 family. GlgB subfamily. In terms of assembly, monomer.

It catalyses the reaction Transfers a segment of a (1-&gt;4)-alpha-D-glucan chain to a primary hydroxy group in a similar glucan chain.. It participates in glycan biosynthesis; glycogen biosynthesis. Functionally, catalyzes the formation of the alpha-1,6-glucosidic linkages in glycogen by scission of a 1,4-alpha-linked oligosaccharide from growing alpha-1,4-glucan chains and the subsequent attachment of the oligosaccharide to the alpha-1,6 position. This is 1,4-alpha-glucan branching enzyme GlgB 1 from Xanthomonas oryzae pv. oryzae (strain KACC10331 / KXO85).